A 219-amino-acid polypeptide reads, in one-letter code: PKHD-type hydroxylase Plav_0037 (219 aa).

Residues 78–172 (NFIRILLSRY…RRAAVGWIRS (95 aa)) form the Fe2OG dioxygenase domain. Fe cation is bound by residues His96, Asp98, and His153. Arg163 contacts 2-oxoglutarate.

The cofactor is Fe(2+). Requires L-ascorbate as cofactor.

The polypeptide is PKHD-type hydroxylase Plav_0037 (Parvibaculum lavamentivorans (strain DS-1 / DSM 13023 / NCIMB 13966)).